The following is a 425-amino-acid chain: MASVFLYHVVGDLTVGKPEMVEFYETETVESAIRAIGESTECGIPVWRKRTTPSLPGFVENSEMRQQRFVGILNSLDIVAFLAKTECLQEEKAMKIPVSEVVSPDNTLLKQVDPGTRLIDALEMMKQGVRRLLVPKSVVWRGMSKRFSILYNGKWLKNSENSSSSSGLSADSTNRPTTSMTSSRDKFCCLSREDVIRFLIGVLGALAPLPLTSISTLGIINQNYNFIEASLPAIEATRRPLCDPSAIAVLEQTENEQQFKIIGEISASKLWKCDYLAAAWALANLYAGQFVMGVEDNMSSRSFSDFLQTSFPGGEQNGTATNAKKFSSRSIGFNPTSPTRLSIGRSMYRGRSAPLTCKTSSSLAAVMAQMLSHRATHVWVTEADSDDVLVGVVGYGEILTAVTKQPSAFVPSNRSYEGFGNENQS.

Residues 16–90 (GKPEMVEFYE…FLAKTECLQE (75 aa)) form the CBS 1 domain. The span at 159 to 172 (SENSSSSSGLSADS) shows a compositional bias: low complexity. Residues 159-182 (SENSSSSSGLSADSTNRPTTSMTS) are disordered. The span at 173–182 (TNRPTTSMTS) shows a compositional bias: polar residues. Transmembrane regions (helical) follow at residues 200–220 (IGVL…LGII) and 275–295 (YLAA…MGVE). One can recognise a CBS 2 domain in the interval 347–409 (MYRGRSAPLT…TAVTKQPSAF (63 aa)).

The protein resides in the vacuole membrane. This Arabidopsis thaliana (Mouse-ear cress) protein is CBS domain-containing protein CBSX6 (CBSX6).